A 151-amino-acid chain; its full sequence is UPF0208 membrane protein YfbV (151 aa).

The next 2 helical transmembrane spans lie at 46–65 and 69–91; these read YAIR…QIAL and LGPA…WWLG.

It belongs to the UPF0208 family.

The protein resides in the cell inner membrane. This Shigella boydii serotype 18 (strain CDC 3083-94 / BS512) protein is UPF0208 membrane protein YfbV.